The primary structure comprises 1394 residues: Tubulin glycylase 3E (1394 aa).

Disordered regions lie at residues 201–230 (KKKSNFQNKSQSQLNNHKNEEKKPSQQRKE), 563–582 (NQKDLQSNQTSSVISQQNSI), 620–663 (DENE…TSNF), and 682–706 (STVKNSDNNNQNQTNPQNQNTNLKE). The span at 205-216 (NFQNKSQSQLNN) shows a compositional bias: low complexity. A compositionally biased stretch (basic and acidic residues) spans 217–230 (HKNEEKKPSQQRKE). Positions 568–582 (QSNQTSSVISQQNSI) are enriched in low complexity. Residues 627-655 (KENVLQQKKNQSNQIVTSQQQSNNYFKQE) are compositionally biased toward polar residues. The segment covering 682 to 703 (STVKNSDNNNQNQTNPQNQNTN) has biased composition (low complexity). A TTL domain is found at 911–1250 (RFIFNITVIA…QNNLQEDLEI (340 aa)). Residues 1058-1061 (QKYI), K1079, and D1081 contribute to the ATP site. 2 consecutive IQ domains span residues 1320 to 1349 (QYWGAIKIQSKIRSFLAKKKLQRLKNQKFT) and 1348 to 1377 (FTFAAIKIQQKMRQFLAKKQLNILKKQQQT).

The protein localises to the cell projection. It is found in the cilium. The protein resides in the cytoplasm. It localises to the cytoskeleton. Its subcellular location is the cilium axoneme. In terms of biological role, probable glycylase which modifies tubulin, generating side chains of glycine on the gamma-carboxyl groups of specific glutamate residues within the C-terminal tail of tubulin. The polypeptide is Tubulin glycylase 3E (TTLL3E) (Tetrahymena thermophila (strain SB210)).